The following is a 120-amino-acid chain: MASRKEALARRASRVRRQIKAVANGRPRLSVHRSSKNIYAQIIDDVAGKTLASASTLEADLRSSLKTGADVAAAAVVGKLVAERGVKAGVKDVVFDRGAFIYHGRIKAVAEAAREGGLNF.

Belongs to the universal ribosomal protein uL18 family. As to quaternary structure, part of the 50S ribosomal subunit; part of the 5S rRNA/L5/L18/L25 subcomplex. Contacts the 5S and 23S rRNAs.

Functionally, this is one of the proteins that bind and probably mediate the attachment of the 5S RNA into the large ribosomal subunit, where it forms part of the central protuberance. This is Large ribosomal subunit protein uL18 from Agrobacterium fabrum (strain C58 / ATCC 33970) (Agrobacterium tumefaciens (strain C58)).